Consider the following 96-residue polypeptide: Large ribosomal subunit protein uL23 (96 aa).

The protein belongs to the universal ribosomal protein uL23 family. Part of the 50S ribosomal subunit. Contacts protein L29, and trigger factor when it is bound to the ribosome.

One of the early assembly proteins it binds 23S rRNA. One of the proteins that surrounds the polypeptide exit tunnel on the outside of the ribosome. Forms the main docking site for trigger factor binding to the ribosome. This is Large ribosomal subunit protein uL23 from Solidesulfovibrio magneticus (strain ATCC 700980 / DSM 13731 / RS-1) (Desulfovibrio magneticus).